A 130-amino-acid polypeptide reads, in one-letter code: Large ribosomal subunit protein bL17 (130 aa).

This sequence belongs to the bacterial ribosomal protein bL17 family. Part of the 50S ribosomal subunit. Contacts protein L32.

This chain is Large ribosomal subunit protein bL17, found in Shewanella pealeana (strain ATCC 700345 / ANG-SQ1).